A 344-amino-acid chain; its full sequence is Dihydroorotate dehydrogenase (quinone) (344 aa).

Residues 65 to 69 and Thr-89 contribute to the FMN site; that span reads AGLDK. Residue Lys-69 coordinates substrate. Residue 114–118 participates in substrate binding; that stretch reads NRLGF. FMN is bound by residues Asn-145 and Asn-178. Position 178 (Asn-178) interacts with substrate. The active-site Nucleophile is the Ser-181. Residue Asn-183 participates in substrate binding. Residues Lys-223 and Thr-251 each coordinate FMN. 252–253 provides a ligand contact to substrate; that stretch reads NT. Residues Gly-274, Gly-303, and 324–325 each bind FMN; that span reads YT.

It belongs to the dihydroorotate dehydrogenase family. Type 2 subfamily. Monomer. Requires FMN as cofactor.

The protein resides in the cell membrane. It catalyses the reaction (S)-dihydroorotate + a quinone = orotate + a quinol. The protein operates within pyrimidine metabolism; UMP biosynthesis via de novo pathway; orotate from (S)-dihydroorotate (quinone route): step 1/1. Functionally, catalyzes the conversion of dihydroorotate to orotate with quinone as electron acceptor. The sequence is that of Dihydroorotate dehydrogenase (quinone) from Methylibium petroleiphilum (strain ATCC BAA-1232 / LMG 22953 / PM1).